Here is a 332-residue protein sequence, read N- to C-terminus: Putative integrase/recombinase y4rC (332 aa).

Residues A5–A98 form the Core-binding (CB) domain. Residues T122–A307 form the Tyr recombinase domain. Residues R162, K187, H259, R262, and H285 contribute to the active site. Y294 functions as the O-(3'-phospho-DNA)-tyrosine intermediate in the catalytic mechanism.

This sequence belongs to the 'phage' integrase family.

The protein is Putative integrase/recombinase y4rC of Sinorhizobium fredii (strain NBRC 101917 / NGR234).